The primary structure comprises 230 residues: Large ribosomal subunit protein uL1 (230 aa).

It belongs to the universal ribosomal protein uL1 family. As to quaternary structure, part of the 50S ribosomal subunit.

Binds directly to 23S rRNA. The L1 stalk is quite mobile in the ribosome, and is involved in E site tRNA release. Its function is as follows. Protein L1 is also a translational repressor protein, it controls the translation of the L11 operon by binding to its mRNA. This chain is Large ribosomal subunit protein uL1, found in Ruminiclostridium cellulolyticum (strain ATCC 35319 / DSM 5812 / JCM 6584 / H10) (Clostridium cellulolyticum).